The chain runs to 44 residues: CQAYGESCSAVVRCCDPNAVCCQYPEDAVCVTRGYCRPPATVLT.

Disulfide bonds link Cys-1/Cys-15, Cys-8/Cys-22, Cys-14/Cys-30, and Cys-21/Cys-36.

As to expression, expressed by the venom duct.

It localises to the secreted. Functionally, neurotoxin. Elicits hypersensibility when injected intracranially in mice. May act via potassium channel currents. The polypeptide is Conotoxin Rg11a (Conus regius (Crown cone)).